A 228-amino-acid chain; its full sequence is Large ribosomal subunit protein bL25 (228 aa).

Polar residues predominate over residues 1 to 10 (MNSLDANTRN). Disordered regions lie at residues 1–20 (MNSL…VRSL) and 187–228 (MKEP…EEKK). Over residues 202 to 228 (EDGKEAAPAAEGDKKDDGEKKATEEKK) the composition is skewed to basic and acidic residues.

It belongs to the bacterial ribosomal protein bL25 family. CTC subfamily. As to quaternary structure, part of the 50S ribosomal subunit; part of the 5S rRNA/L5/L18/L25 subcomplex. Contacts the 5S rRNA. Binds to the 5S rRNA independently of L5 and L18.

This is one of the proteins that binds to the 5S RNA in the ribosome where it forms part of the central protuberance. This Pelagibacter ubique (strain HTCC1062) protein is Large ribosomal subunit protein bL25.